We begin with the raw amino-acid sequence, 459 residues long: Mitochondrial distribution and morphology protein 10 (459 aa).

It belongs to the MDM10 family. Component of the ER-mitochondria encounter structure (ERMES) or MDM complex, composed of mmm1, mdm10, mdm12 and mdm34. Associates with the mitochondrial outer membrane sorting assembly machinery SAM(core) complex.

The protein localises to the mitochondrion outer membrane. In terms of biological role, component of the ERMES/MDM complex, which serves as a molecular tether to connect the endoplasmic reticulum and mitochondria. Components of this complex are involved in the control of mitochondrial shape and protein biogenesis and may function in phospholipid exchange. mdm10 is involved in the late assembly steps of the general translocase of the mitochondrial outer membrane (TOM complex). Functions in the tom40-specific route of the assembly of outer membrane beta-barrel proteins, including the association of tom40 with the receptor tom22 and small TOM proteins. Can associate with the SAM(core) complex as well as the mdm12-mmm1 complex, both involved in late steps of the major beta-barrel assembly pathway, that is responsible for biogenesis of all outer membrane beta-barrel proteins. May act as a switch that shuttles between both complexes and channels precursor proteins into the tom40-specific pathway. Plays a role in mitochondrial morphology and in the inheritance of mitochondria. This is Mitochondrial distribution and morphology protein 10 (mdmB) from Aspergillus terreus (strain NIH 2624 / FGSC A1156).